The chain runs to 645 residues: Alkyldihydroxyacetonephosphate synthase, peroxisomal (645 aa).

Over residues 1-10 (MAEAAAGEAG) the composition is skewed to low complexity. The N-terminal 45 residues, 1 to 45 (MAEAAAGEAGASERDPDAGRARRRLRVLSGHLLGRPQEAPSTNEC), are a transit peptide targeting the peroxisome. A disordered region spans residues 1–72 (MAEAAAGEAG…AAPESGTIPK (72 aa)). Positions 11–20 (ASERDPDAGR) are enriched in basic and acidic residues. Positions 50 to 69 (AASAAGASPAATPAAPESGT) are enriched in low complexity. Residues S52 and S57 each carry the phosphoserine modification. T61 carries the phosphothreonine modification. Position 89 is an N6-acetyllysine (K89). Positions 189-371 (FERIPDIVVW…TEATIKIRPT (183 aa)) constitute an FAD-binding PCMH-type domain. Residues 221-227 (PIGGGTS), 290-296 (DSLEFST), and 303-306 (TRAS) contribute to the FAD site. Position 334 is an N6-acetyllysine (K334). 355–361 (EGTLGVI) contacts FAD. Residue R502 coordinates substrate. Residue Y565 is the Proton donor/acceptor of the active site. Important for enzyme activity regions lie at residues 602 to 604 (HHH) and 641 to 645 (NRNLL).

It belongs to the FAD-binding oxidoreductase/transferase type 4 family. Homodimer. FAD serves as cofactor.

It is found in the peroxisome membrane. It localises to the peroxisome. It carries out the reaction a long chain fatty alcohol + a 1-acylglycerone 3-phosphate = a 1-O-alkylglycerone 3-phosphate + a long-chain fatty acid + H(+). The catalysed reaction is hexadecan-1-ol + 1-hexadecanoylglycerone 3-phosphate = 1-O-hexadecylglycerone 3-phosphate + hexadecanoate + H(+). The enzyme catalyses 1-hexadecanoylglycerone 3-phosphate + a long-chain fatty acid = a 1-acylglycerone 3-phosphate + hexadecanoate. It participates in glycerolipid metabolism; ether lipid biosynthesis. In terms of biological role, catalyzes the exchange of the acyl chain in acyl-dihydroxyacetonephosphate (acyl-DHAP) for a long chain fatty alcohol, yielding the first ether linked intermediate, i.e. alkyl-dihydroxyacetonephosphate (alkyl-DHAP), in the pathway of ether lipid biosynthesis. The protein is Alkyldihydroxyacetonephosphate synthase, peroxisomal (Agps) of Mus musculus (Mouse).